A 614-amino-acid polypeptide reads, in one-letter code: Phosphomethylpyrimidine synthase (614 aa).

The span at 1 to 16 (MNAQLSALQQQAQQLS) shows a compositional bias: low complexity. Residues 1–36 (MNAQLSALQQQAQQLSESVTRPIPGSRKIHVPGSRP) form a disordered region. Substrate is bound by residues Asn-230, Met-259, Tyr-288, His-324, 344-346 (SRG), 385-388 (DGLR), and Glu-424. A Zn(2+)-binding site is contributed by His-428. A substrate-binding site is contributed by Tyr-451. His-492 is a Zn(2+) binding site. Residues Cys-572, Cys-575, and Cys-580 each coordinate [4Fe-4S] cluster.

It belongs to the ThiC family. Homodimer. [4Fe-4S] cluster serves as cofactor.

The catalysed reaction is 5-amino-1-(5-phospho-beta-D-ribosyl)imidazole + S-adenosyl-L-methionine = 4-amino-2-methyl-5-(phosphooxymethyl)pyrimidine + CO + 5'-deoxyadenosine + formate + L-methionine + 3 H(+). It functions in the pathway cofactor biosynthesis; thiamine diphosphate biosynthesis. Its function is as follows. Catalyzes the synthesis of the hydroxymethylpyrimidine phosphate (HMP-P) moiety of thiamine from aminoimidazole ribotide (AIR) in a radical S-adenosyl-L-methionine (SAM)-dependent reaction. This Stenotrophomonas maltophilia (strain R551-3) protein is Phosphomethylpyrimidine synthase.